The chain runs to 415 residues: 3-isopropylmalate dehydratase large subunit (415 aa).

[4Fe-4S] cluster is bound by residues Cys297, Cys355, and Cys358.

It belongs to the aconitase/IPM isomerase family. LeuC type 2 subfamily. Heterodimer of LeuC and LeuD. Requires [4Fe-4S] cluster as cofactor.

The catalysed reaction is (2R,3S)-3-isopropylmalate = (2S)-2-isopropylmalate. The protein operates within amino-acid biosynthesis; L-leucine biosynthesis; L-leucine from 3-methyl-2-oxobutanoate: step 2/4. Catalyzes the isomerization between 2-isopropylmalate and 3-isopropylmalate, via the formation of 2-isopropylmaleate. This chain is 3-isopropylmalate dehydratase large subunit, found in Caldivirga maquilingensis (strain ATCC 700844 / DSM 13496 / JCM 10307 / IC-167).